The following is a 623-amino-acid chain: Pyranose 2-oxidase (623 aa).

The signal sequence occupies residues 1–27 (MSTSSSDPFFNFTKSSFRSAAAQKASA). Positions 28-38 (TSLPPLPGPDK) are excised as a propeptide. Histidine 167 carries the post-translational modification Tele-8alpha-FAD histidine. Substrate is bound by residues glutamine 448 and histidine 450. Catalysis depends on histidine 548, which acts as the Proton acceptor. Asparagine 593 is a catalytic residue.

It belongs to the GMC oxidoreductase family. Homotetramer. FAD serves as cofactor. Not glycosylated.

It is found in the periplasm. The catalysed reaction is D-glucose + O2 = 2-dehydro-D-glucose + H2O2. Functionally, catalyzes the oxidation of various aldopyranoses and disaccharides on carbon-2 to the corresponding 2-keto sugars concomitant with the reduction of O(2) to H(2)O(2). Plays an important role in lignin degradation of wood rot fungi by supplying the essential cosubstrate H(2)O(2) for the ligninolytic peroxidases, lignin peroxidase and manganese-dependent peroxidase. The preferred substrate is D-glucose which is converted to 2-dehydro-D-glucose. Also acts on D-xylose, together with D-glucose the major sugars derived from wood, on L-sorbose, D-galactose and 1,5-anhydroglucitol, a diagnostic marker of diabetes mellitus. In Trametes versicolor (White-rot fungus), this protein is Pyranose 2-oxidase (P2OX).